The following is a 216-amino-acid chain: Thymidylate kinase (216 aa).

10 to 17 (GPDGAGKS) provides a ligand contact to ATP.

The protein belongs to the thymidylate kinase family.

It carries out the reaction dTMP + ATP = dTDP + ADP. Its function is as follows. Phosphorylation of dTMP to form dTDP in both de novo and salvage pathways of dTTP synthesis. The polypeptide is Thymidylate kinase (Lactobacillus acidophilus (strain ATCC 700396 / NCK56 / N2 / NCFM)).